A 367-amino-acid polypeptide reads, in one-letter code: tRNA-specific 2-thiouridylase MnmA (367 aa).

ATP contacts are provided by residues 13 to 20 and Met39; that span reads GLSGGVDS. Residues 99-101 are interaction with target base in tRNA; sequence NPD. Cys104 serves as the catalytic Nucleophile. A disulfide bond links Cys104 and Cys200. Gly128 contacts ATP. The tract at residues 150–152 is interaction with tRNA; sequence KDQ. The active-site Cysteine persulfide intermediate is Cys200. Residues 307 to 308 are interaction with tRNA; that stretch reads RY.

Belongs to the MnmA/TRMU family.

The protein resides in the cytoplasm. It carries out the reaction S-sulfanyl-L-cysteinyl-[protein] + uridine(34) in tRNA + AH2 + ATP = 2-thiouridine(34) in tRNA + L-cysteinyl-[protein] + A + AMP + diphosphate + H(+). In terms of biological role, catalyzes the 2-thiolation of uridine at the wobble position (U34) of tRNA, leading to the formation of s(2)U34. In Neisseria gonorrhoeae (strain ATCC 700825 / FA 1090), this protein is tRNA-specific 2-thiouridylase MnmA.